Reading from the N-terminus, the 226-residue chain is Late protein I226R (226 aa).

Positions 1 to 16 are cleaved as a signal peptide; sequence MKMETFLVCLFHNADG. N-linked (GlcNAc...) asparagine; by host glycosylation is found at Asn-142 and Asn-164.

Belongs to the asfivirus I226R family.

Plays a role in the inhibition of host NF-kappa-B and IRF3 signaling pathways. Mechanistically, promotes the degradation of host IKBKG through enhancing its ubiquitination leading to inhibition of both pathways. In Ornithodoros (relapsing fever ticks), this protein is Late protein I226R.